The primary structure comprises 219 residues: Ribose-5-phosphate isomerase A (219 aa).

Substrate is bound by residues 28–31 (SGST), 81–84 (DGAD), and 94–97 (KGGG). Residue Glu-103 is the Proton acceptor of the active site. Substrate is bound at residue Lys-121.

This sequence belongs to the ribose 5-phosphate isomerase family. Homodimer.

The catalysed reaction is aldehydo-D-ribose 5-phosphate = D-ribulose 5-phosphate. It functions in the pathway carbohydrate degradation; pentose phosphate pathway; D-ribose 5-phosphate from D-ribulose 5-phosphate (non-oxidative stage): step 1/1. Functionally, catalyzes the reversible conversion of ribose-5-phosphate to ribulose 5-phosphate. The polypeptide is Ribose-5-phosphate isomerase A (Haemophilus influenzae (strain PittGG)).